Consider the following 963-residue polypeptide: Phosphofurin acidic cluster sorting protein 1 (963 aa).

A compositionally biased stretch (gly residues) spans 1–22; it reads MAERGGAGGGPGGAGGGSGQRG. Disordered regions lie at residues 1–72 and 78–97; these read MAER…SSST and VAVASGSAPPGGPGPGRTPA. Ala2 is modified (N-acetylalanine). Ser28 bears the Phosphoserine mark. Phosphothreonine is present on Thr46. Residues 53-72 show a composition bias toward low complexity; sequence ATSSSSSTSAAAASSSSSST. Positions 168 to 175 are involved in binding to AP-1; the sequence is ETELQLTF. Position 251 is a phosphotyrosine (Tyr251). The span at 262 to 273 shows a compositional bias: basic and acidic residues; the sequence is GIKSKLSDRSPD. Disordered stretches follow at residues 262 to 299 and 377 to 428; these read GIKSKLSDRSPDIDNYSEEEEESFSSEQEGSDDPLHGQ and NPSD…GKDT. A compositionally biased stretch (acidic residues) spans 276–293; that stretch reads NYSEEEEESFSSEQEGSD. Positions 353–377 form a coiled coil; that stretch reads HVSREQIREVEEDLDELYDSLEMYN. Residues Ser379 and Ser381 each carry the phosphoserine modification. The segment covering 406-428 has biased composition (polar residues); sequence MSQSSSQTEIGSLNSKGSLGKDT. Residues Ser430 and Ser495 each carry the phosphoserine modification. Disordered regions lie at residues 476–542 and 760–804; these read PEKV…HSTQ and SPST…SMSS. Over residues 483 to 496 the composition is skewed to polar residues; the sequence is MKSSKTDLQGSASP. Thr504 bears the Phosphothreonine mark. Ser519, Ser528, Ser529, Ser531, and Ser534 each carry phosphoserine. The span at 770 to 804 shows a compositional bias: low complexity; it reads SPVVSLTVPSTSPPSSSGLSRDATATPPSSPSMSS.

The protein belongs to the PACS family. As to quaternary structure, associates with AP-1 and AP-3 but not with AP-2 complexes. Interacts with FURIN. Forms a ternary complex with FURIN and AP-1. Interacts with NPHP1; the interaction is dependent of NPHP1 phosphorylation by CK2. Interacts with PKD2 (via acidic region). Interacts with SORL1. Interacts with WDR37. In terms of assembly, (Microbial infection) Interacts with HIV-1 Nef. (Microbial infection) Interacts with Epstein-barr virus protein BBLF1.

It localises to the golgi apparatus. The protein resides in the trans-Golgi network. Functionally, coat protein that is involved in the localization of trans-Golgi network (TGN) membrane proteins that contain acidic cluster sorting motifs. Controls the endosome-to-Golgi trafficking of furin and mannose-6-phosphate receptor by connecting the acidic-cluster-containing cytoplasmic domain of these molecules with the adapter-protein complex-1 (AP-1) of endosomal clathrin-coated membrane pits. Involved in HIV-1 nef-mediated removal of MHC-I from the cell surface to the TGN. Required for normal ER Ca2+ handling in lymphocytes. Together with WDR37, it plays an essential role in lymphocyte development, quiescence and survival. Required for stabilizing peripheral lymphocyte populations. This is Phosphofurin acidic cluster sorting protein 1 (PACS1) from Homo sapiens (Human).